A 35-amino-acid chain; its full sequence is Cupiennin-2d (35 aa).

At glutamine 35 the chain carries Glutamine amide.

In terms of tissue distribution, expressed by the venom gland.

The protein localises to the secreted. The sequence is that of Cupiennin-2d from Cupiennius salei (American wandering spider).